We begin with the raw amino-acid sequence, 278 residues long: Myb/SANT-like DNA-binding domain-containing protein 1 (278 aa).

The segment at 1–27 (MVRGAGPGPSLSALSHPTGASGMAAAE) is disordered. The 86-residue stretch at 44–129 (RNWTDAEMRG…PDWPYYLAID (86 aa)) folds into the Myb-like domain. The interval 138–168 (SCDGKLPDSQPPGPSTSQTEASLSPPAKSTP) is disordered.

The sequence is that of Myb/SANT-like DNA-binding domain-containing protein 1 (MSANTD1) from Homo sapiens (Human).